The sequence spans 223 residues: Translation initiation factor 6 (223 aa).

The protein belongs to the eIF-6 family.

Binds to the 50S ribosomal subunit and prevents its association with the 30S ribosomal subunit to form the 70S initiation complex. In Saccharolobus islandicus (strain M.16.27) (Sulfolobus islandicus), this protein is Translation initiation factor 6.